Here is a 391-residue protein sequence, read N- to C-terminus: Phosphoglycerate kinase (391 aa).

Residues 21 to 23 (DLN), Arg36, 59 to 62 (HLGR), Arg113, and Arg146 each bind substrate. ATP is bound by residues Lys197, Glu319, and 345–348 (GGDT).

The protein belongs to the phosphoglycerate kinase family. Monomer.

The protein localises to the cytoplasm. The enzyme catalyses (2R)-3-phosphoglycerate + ATP = (2R)-3-phospho-glyceroyl phosphate + ADP. It participates in carbohydrate degradation; glycolysis; pyruvate from D-glyceraldehyde 3-phosphate: step 2/5. The chain is Phosphoglycerate kinase from Xanthomonas axonopodis pv. citri (strain 306).